Here is a 239-residue protein sequence, read N- to C-terminus: UPF0173 metal-dependent hydrolase rrnAC0300 (239 aa).

Belongs to the UPF0173 family.

The chain is UPF0173 metal-dependent hydrolase rrnAC0300 from Haloarcula marismortui (strain ATCC 43049 / DSM 3752 / JCM 8966 / VKM B-1809) (Halobacterium marismortui).